We begin with the raw amino-acid sequence, 1153 residues long: Cytosolic carboxypeptidase 1 (1153 aa).

The tract at residues 357–400 is disordered; it reads NQPPGVDDVVDESDENEATEVDTENDTENEEDDTGHKTQNDDIE. Residues 364-389 are compositionally biased toward acidic residues; it reads DVVDESDENEATEVDTENDTENEEDD. A Peptidase M14 domain is found at 774–1063; that stretch reads YPYTYSMLKM…QFCLALLRLR (290 aa). Zn(2+) contacts are provided by His845, Glu848, and His942. The Proton donor/acceptor role is filled by Glu1027. Acidic residues predominate over residues 1108–1128; the sequence is AFLEEVDYSAESNDENDPELE. The interval 1108-1153 is disordered; it reads AFLEEVDYSAESNDENDPELEPDLRDNHALPDPSSDSELSHQDSLT. The segment covering 1141–1153 has biased composition (polar residues); it reads SSDSELSHQDSLT.

This sequence belongs to the peptidase M14 family. It depends on Zn(2+) as a cofactor.

It is found in the cytoplasm. The protein resides in the cytosol. Its subcellular location is the nucleus. It localises to the mitochondrion. It carries out the reaction (L-glutamyl)(n+1)-gamma-L-glutamyl-L-glutamyl-[protein] + H2O = (L-glutamyl)(n)-gamma-L-glutamyl-L-glutamyl-[protein] + L-glutamate. The enzyme catalyses C-terminal L-alpha-aminoacyl-L-glutamyl-L-glutamyl-[tubulin] + H2O = C-terminal L-alpha-aminoacyl-L-glutamyl-[tubulin] + L-glutamate. In terms of biological role, metallocarboxypeptidase that mediates protein deglutamylation of tubulin and non-tubulin target proteins. Catalyzes the removal of polyglutamate side chains present on the gamma-carboxyl group of glutamate residues within the C-terminal tail of alpha- and beta-tubulin. Specifically cleaves tubulin long-side-chains, while it is not able to remove the branching point glutamate. Also catalyzes the removal of polyglutamate residues from the carboxy-terminus of alpha-tubulin as well as non-tubulin proteins. The chain is Cytosolic carboxypeptidase 1 (agtpbp1) from Danio rerio (Zebrafish).